The sequence spans 346 residues: MPRGQKSKLRAREKRQRTRGQTQDLKVGQPTAAEKEESPSSSSSVLRDTASSSLAFGIPQEPQREPPTTSAAAAMSCTGSDKGDESQDEENASSSQASTSTERSLKDSLTRKTKMLVQFLLYKYKMKEPTTKAEMLKIISKKYKEHFPEIFRKVSQRTELVFGLALKEVNPTTHSYILVSMLGPNDGNQSSAWTLPRNGLLMPLLSVIFLNGNCAREEEIWEFLNMLGIYDGKRHLIFGEPRKLITQDLVQEKYLEYQQVPNSDPPRYQFLWGPRAHAETSKMKVLEFLAKVNDTTPNNFPLLYEEALRDEEERAGARPRVAARRGTTAMTSAYSRATSSSSSQPM.

The segment covering 1-18 (MPRGQKSKLRAREKRQRT) has biased composition (basic residues). The segment at 1-107 (MPRGQKSKLR…STSTERSLKD (107 aa)) is disordered. Residues 45 to 54 (VLRDTASSSL) are compositionally biased toward polar residues. Residues 92 to 101 (ASSSQASTST) are compositionally biased toward low complexity. One can recognise an MAGE domain in the interval 109-307 (LTRKTKMLVQ…NNFPLLYEEA (199 aa)). A disordered region spans residues 311–346 (EEERAGARPRVAARRGTTAMTSAYSRATSSSSSQPM). The segment covering 318–346 (RPRVAARRGTTAMTSAYSRATSSSSSQPM) has biased composition (low complexity).

Expressed in testis.

The protein localises to the cytoplasm. The chain is Melanoma-associated antigen B4 (MAGEB4) from Homo sapiens (Human).